A 187-amino-acid polypeptide reads, in one-letter code: Dihydrofolate reductase (187 aa).

Residues proline 4–lysine 185 enclose the DHFR domain. NADP(+) is bound by residues alanine 10 and glycine 16–aspartate 22. Residue glutamate 31–glutamine 36 coordinates substrate. Lysine 33 carries the N6-acetyllysine; alternate modification. Residue lysine 33 is modified to N6-succinyllysine; alternate. Arginine 55–threonine 57 serves as a coordination point for NADP(+). Arginine 71 is a substrate binding site. NADP(+)-binding positions include serine 77–glutamate 79 and glycine 117–glutamate 124.

It belongs to the dihydrofolate reductase family. As to quaternary structure, homodimer.

It localises to the mitochondrion. The protein resides in the cytoplasm. It carries out the reaction (6S)-5,6,7,8-tetrahydrofolate + NADP(+) = 7,8-dihydrofolate + NADPH + H(+). The protein operates within cofactor biosynthesis; tetrahydrofolate biosynthesis; 5,6,7,8-tetrahydrofolate from 7,8-dihydrofolate: step 1/1. Key enzyme in folate metabolism. Contributes to the de novo mitochondrial thymidylate biosynthesis pathway. Catalyzes an essential reaction for de novo glycine and purine synthesis, and for DNA precursor synthesis. Binds its own mRNA. In Rattus norvegicus (Rat), this protein is Dihydrofolate reductase (Dhfr).